The primary structure comprises 240 residues: tRNA pseudouridine synthase B (240 aa).

Residue Asp-54 is the Nucleophile of the active site.

The protein belongs to the pseudouridine synthase TruB family. Type 1 subfamily.

It carries out the reaction uridine(55) in tRNA = pseudouridine(55) in tRNA. Its function is as follows. Responsible for synthesis of pseudouridine from uracil-55 in the psi GC loop of transfer RNAs. This is tRNA pseudouridine synthase B from Chlorobaculum tepidum (strain ATCC 49652 / DSM 12025 / NBRC 103806 / TLS) (Chlorobium tepidum).